The chain runs to 290 residues: uncharacterized protein (290 aa).

The HTH lysR-type domain maps to 1–61; that stretch reads MVMNMNHLHI…RDKHHGLMLT (61 aa). The segment at residues 20-39 is a DNA-binding region (H-T-H motif); that stretch reads ITEAAKELFISQPAVSKAIK.

Belongs to the LysR transcriptional regulatory family.

This is an uncharacterized protein from Bacillus subtilis (strain 168).